The following is a 67-amino-acid chain: Probable Sec-independent protein translocase protein TatE (67 aa).

Residues 4 to 21 (ISITKLLVVAALVVLLFG) form a helical membrane-spanning segment.

Belongs to the TatA/E family. TatE subfamily.

It is found in the cell inner membrane. In terms of biological role, part of the twin-arginine translocation (Tat) system that transports large folded proteins containing a characteristic twin-arginine motif in their signal peptide across membranes. TatE shares overlapping functions with TatA. The sequence is that of Probable Sec-independent protein translocase protein TatE from Salmonella arizonae (strain ATCC BAA-731 / CDC346-86 / RSK2980).